The following is a 337-amino-acid chain: Cytoskeleton protein RodZ (337 aa).

Residues Met1–Gly111 are Cytoplasmic-facing. An HTH cro/C1-type domain is found at Leu19–Leu71. A DNA-binding region (H-T-H motif) is located at residues Gln30–Glu49. The helical; Signal-anchor for type II membrane protein transmembrane segment at Trp112–Trp132 threads the bilayer. Over Trp133–Gln337 the chain is Periplasmic. The segment covering Thr145 to Asn167 has biased composition (polar residues). The segment at Thr145–Ala235 is disordered. The span at Thr168 to Gln207 shows a compositional bias: low complexity. Residues Asn208 to Val218 show a composition bias toward polar residues. The segment covering Asp219–Ala235 has biased composition (low complexity).

The protein belongs to the RodZ family.

The protein resides in the cell inner membrane. Cytoskeletal protein that is involved in cell-shape control through regulation of the length of the long axis. The polypeptide is Cytoskeleton protein RodZ (Shigella boydii serotype 4 (strain Sb227)).